The chain runs to 155 residues: SsrA-binding protein (155 aa).

Basic and acidic residues predominate over residues 127 to 149 (KKDYDKRNDMRKKEAKREMERTF). Residues 127-155 (KKDYDKRNDMRKKEAKREMERTFKSKNQY) are disordered.

This sequence belongs to the SmpB family.

The protein localises to the cytoplasm. Required for rescue of stalled ribosomes mediated by trans-translation. Binds to transfer-messenger RNA (tmRNA), required for stable association of tmRNA with ribosomes. tmRNA and SmpB together mimic tRNA shape, replacing the anticodon stem-loop with SmpB. tmRNA is encoded by the ssrA gene; the 2 termini fold to resemble tRNA(Ala) and it encodes a 'tag peptide', a short internal open reading frame. During trans-translation Ala-aminoacylated tmRNA acts like a tRNA, entering the A-site of stalled ribosomes, displacing the stalled mRNA. The ribosome then switches to translate the ORF on the tmRNA; the nascent peptide is terminated with the 'tag peptide' encoded by the tmRNA and targeted for degradation. The ribosome is freed to recommence translation, which seems to be the essential function of trans-translation. In Lysinibacillus sphaericus (strain C3-41), this protein is SsrA-binding protein.